The primary structure comprises 789 residues: Probable 3-hydroxyacyl-CoA dehydrogenase (789 aa).

The protein belongs to the 3-hydroxyacyl-CoA dehydrogenase family.

It carries out the reaction a (3S)-3-hydroxyacyl-CoA + NAD(+) = a 3-oxoacyl-CoA + NADH + H(+). The protein operates within lipid metabolism; fatty acid beta-oxidation. Functionally, involved in the degradation of long-chain fatty acids. This Bacillus subtilis (strain 168) protein is Probable 3-hydroxyacyl-CoA dehydrogenase (fadN).